The primary structure comprises 185 residues: Signal peptidase I P (185 aa).

Topologically, residues 1–14 (MFDKEKRKKSNIID) are cytoplasmic. The helical transmembrane segment at 15 to 34 (WIKAILIALILVFLVRTFLF) threads the bilayer. Residues 35-185 (EPYIVQGESM…FPLDRIRHAK (151 aa)) lie on the Extracellular side of the membrane. Residues S43 and K85 contribute to the active site.

The protein belongs to the peptidase S26 family.

It localises to the cell membrane. The catalysed reaction is Cleavage of hydrophobic, N-terminal signal or leader sequences from secreted and periplasmic proteins.. The chain is Signal peptidase I P (sipP) from Bacillus subtilis subsp. natto.